The following is a 374-amino-acid chain: Lipoyl synthase, mitochondrial (374 aa).

The transit peptide at 1-19 (MHSRSALLYRFLRPASRCF) directs the protein to the mitochondrion. 7 residues coordinate [4Fe-4S] cluster: cysteine 103, cysteine 108, cysteine 114, cysteine 134, cysteine 138, cysteine 141, and serine 350. Residues 119 to 339 (ETGTATATIM…RLLGMEMGFR (221 aa)) form the Radical SAM core domain.

The protein belongs to the radical SAM superfamily. Lipoyl synthase family. It depends on [4Fe-4S] cluster as a cofactor. Expressed in leaves and flowers, but not in roots. Expressed in roots, rosette leaves, cauline leaves, stems, flowers and siliques.

The protein localises to the mitochondrion. The enzyme catalyses [[Fe-S] cluster scaffold protein carrying a second [4Fe-4S](2+) cluster] + N(6)-octanoyl-L-lysyl-[protein] + 2 oxidized [2Fe-2S]-[ferredoxin] + 2 S-adenosyl-L-methionine + 4 H(+) = [[Fe-S] cluster scaffold protein] + N(6)-[(R)-dihydrolipoyl]-L-lysyl-[protein] + 4 Fe(3+) + 2 hydrogen sulfide + 2 5'-deoxyadenosine + 2 L-methionine + 2 reduced [2Fe-2S]-[ferredoxin]. It functions in the pathway protein modification; protein lipoylation via endogenous pathway; protein N(6)-(lipoyl)lysine from octanoyl-[acyl-carrier-protein]: step 2/2. Its function is as follows. Catalyzes the radical-mediated insertion of two sulfur atoms into the C-6 and C-8 positions of the octanoyl moiety bound to the lipoyl domains of lipoate-dependent enzymes, thereby converting the octanoylated domains into lipoylated derivatives. Together with LIP2 is essential for mitochondrial protein lipoylation during seed development. Required for the lipoylation of mitochondrial pyruvate dehydrogenase component E2 proteins in leaves and roots. In Arabidopsis thaliana (Mouse-ear cress), this protein is Lipoyl synthase, mitochondrial.